The chain runs to 887 residues: Multiple RNA-binding domain-containing protein 1 (887 aa).

The RRM 1 domain occupies 2-94; it reads SRIIVKGLPV…SKIEVSMAKS (93 aa). Disordered regions lie at residues 121-143, 203-276, and 297-336; these read KLLQ…NIDD, KEEN…RNLA, and SEAE…DEEL. S220 and S264 each carry phosphoserine. A compositionally biased stretch (basic and acidic residues) spans 264–276; sequence SDEKENEKRRNLA. A compositionally biased stretch (polar residues) spans 306–315; it reads SSYATEQNES. Over residues 316–325 the composition is skewed to basic and acidic residues; sequence LDTKKEEQPE. 4 RRM domains span residues 345 to 423, 532 to 604, 663 to 746, and 763 to 840; these read GRLF…PGEE, KVIL…RGPK, VSIF…LSHR, and GKII…YAEE. Residues 864–887 are disordered; sequence EMAALRNGGGRKKLDVDDEENEGF.

The protein belongs to the RRM MRD1 family. In terms of assembly, interacts with NOP1. Binds to the 35S pre-rRNA and the U3 snoRNA.

The protein resides in the nucleus. Involved in pre-rRNA processing. Required for maintaining steady-state levels of 40S ribosomal subunit. Required for the initial processing of pre-rRNA at the A0 to A2 sites, leading to the processing of the 23S pre-rRNA intermediate to the 18S rRNA. In Saccharomyces cerevisiae (strain ATCC 204508 / S288c) (Baker's yeast), this protein is Multiple RNA-binding domain-containing protein 1 (MRD1).